An 86-amino-acid polypeptide reads, in one-letter code: Mu-theraphotoxin-Hhn1c (86 aa).

Residues 1–21 (MKASMFLALAGLALLFVVCYA) form the signal peptide. Residues 22–49 (SESEEKEFSNELLSSVLAVDDNSKGEER) constitute a propeptide that is removed on maturation. Intrachain disulfides connect Cys51–Cys66, Cys58–Cys73, and Cys65–Cys80. Ile84 carries the isoleucine amide modification.

Belongs to the neurotoxin 10 (Hwtx-1) family. 22 (Htx-4) subfamily. As to quaternary structure, monomer. As to expression, expressed by the venom gland.

It is found in the secreted. Functionally, neurotoxin. Selectively blocks neuronal tetrodotoxin-sensitive voltage-gated sodium channels (Nav). Does not affect tetrodotoxin-resistant voltage-gated sodium channels or calcium channels. In Cyriopagopus hainanus (Chinese bird spider), this protein is Mu-theraphotoxin-Hhn1c.